A 379-amino-acid polypeptide reads, in one-letter code: tRNA (guanine(26)-N(2))-dimethyltransferase (379 aa).

Positions 1-26 (MECREITEGSTTFTAPVQDETTQFPP) are disordered. One can recognise a Trm1 methyltransferase domain in the interval 4 to 369 (REITEGSTTF…APLPLIEEKI (366 aa)). Residues 8–25 (EGSTTFTAPVQDETTQFP) show a composition bias toward polar residues. The S-adenosyl-L-methionine site is built by arginine 41, arginine 66, aspartate 82, aspartate 108, and alanine 109. Zn(2+) contacts are provided by cysteine 237, cysteine 240, cysteine 257, and cysteine 260.

Belongs to the class I-like SAM-binding methyltransferase superfamily. Trm1 family.

The catalysed reaction is guanosine(26) in tRNA + 2 S-adenosyl-L-methionine = N(2)-dimethylguanosine(26) in tRNA + 2 S-adenosyl-L-homocysteine + 2 H(+). In terms of biological role, dimethylates a single guanine residue at position 26 of a number of tRNAs using S-adenosyl-L-methionine as donor of the methyl groups. This is tRNA (guanine(26)-N(2))-dimethyltransferase from Methanocorpusculum labreanum (strain ATCC 43576 / DSM 4855 / Z).